A 449-amino-acid chain; its full sequence is Sensor protein QseC (449 aa).

Over 1–12 (MKLTQRLSLRVR) the chain is Cytoplasmic. The helical transmembrane segment at 13-33 (LTLIFLILVSITWAISSFVAW) threads the bilayer. Topologically, residues 34–161 (RKTTDNVDEL…REDMALAIVA (128 aa)) are periplasmic. A helical membrane pass occupies residues 162–182 (AQLTPWLIALPFMLLILLLLL). Residues 183 to 235 (HRELRPLKKLAQALRFRSPESETPLDAKGVPSEVRPLVEALNQLFSRIHSMMV) enclose the HAMP domain. Residues 183–449 (HRELRPLKKL…EGGFEAVVRW (267 aa)) lie on the Cytoplasmic side of the membrane. The region spanning 243-449 (DAAHELRSPL…EGGFEAVVRW (207 aa)) is the Histidine kinase domain. His-246 bears the Phosphohistidine; by autocatalysis mark.

It localises to the cell inner membrane. It catalyses the reaction ATP + protein L-histidine = ADP + protein N-phospho-L-histidine.. Functionally, member of a two-component regulatory system QseB/QseC. Activates the flagella regulon by activating transcription of FlhDC. May activate QseB by phosphorylation. This Salmonella typhi protein is Sensor protein QseC (qseC).